A 1377-amino-acid chain; its full sequence is DNA-directed RNA polymerase subunit beta (1377 aa).

The protein belongs to the RNA polymerase beta chain family. The RNAP catalytic core consists of 2 alpha, 1 beta, 1 beta' and 1 omega subunit. When a sigma factor is associated with the core the holoenzyme is formed, which can initiate transcription.

It carries out the reaction RNA(n) + a ribonucleoside 5'-triphosphate = RNA(n+1) + diphosphate. In terms of biological role, DNA-dependent RNA polymerase catalyzes the transcription of DNA into RNA using the four ribonucleoside triphosphates as substrates. The chain is DNA-directed RNA polymerase subunit beta from Brucella abortus (strain S19).